Reading from the N-terminus, the 312-residue chain is Olfactory receptor 6C70 (312 aa).

The Extracellular portion of the chain corresponds to 1–22; the sequence is MKNHTRQIEFILLGLTDNSQLQ. An N-linked (GlcNAc...) asparagine glycan is attached at Asn3. Residues 23–43 traverse the membrane as a helical segment; the sequence is IVIFLFLLLNCVLSMIGNFTI. Over 44–63 the chain is Cytoplasmic; sequence IALILLDSQLKTPMYFFLRN. The helical transmembrane segment at 64-84 threads the bilayer; sequence FSFLEISFTTACIPRFLITIV. The Extracellular portion of the chain corresponds to 85–95; it reads TREKTISCNGC. Cysteines 95 and 177 form a disulfide. The chain crosses the membrane as a helical span at residues 96 to 116; it reads ISQLFFYIFLGVTEFFLLAAL. Residues 117 to 141 lie on the Cytoplasmic side of the membrane; that stretch reads SYDRYVAICKPLRYMSIMSNKVCYQ. A helical membrane pass occupies residues 142–162; sequence LVFSSWVTGFLIIFTPLILGL. The Extracellular segment spans residues 163–194; the sequence is NLDFCASNIIDHFICDISLILQLSCSDTHLLE. Residues 195 to 215 traverse the membrane as a helical segment; sequence LIAFLLAVMTLIVTLFLVILS. Residues 216–237 lie on the Cytoplasmic side of the membrane; the sequence is YSYIIKTILKFPSAQQKKKAFS. A helical transmembrane segment spans residues 238–258; sequence TCSSHMIVVSITYGSCMFIYI. At 259–272 the chain is on the extracellular side; that stretch reads KPSANERVALSKGV. The chain crosses the membrane as a helical span at residues 273–290; the sequence is TVLNTSVAPLLNPFIYTL. Topologically, residues 291–312 are cytoplasmic; it reads RNQQVKQAFKAVFRKIFSASDK.

It belongs to the G-protein coupled receptor 1 family.

It localises to the cell membrane. Functionally, odorant receptor. The protein is Olfactory receptor 6C70 (OR6C70) of Homo sapiens (Human).